A 311-amino-acid chain; its full sequence is tRNA dimethylallyltransferase (311 aa).

ATP is bound at residue 16 to 23 (GPTASGKS). 18–23 (TASGKS) provides a ligand contact to substrate. The segment at 41–44 (DSMQ) is interaction with substrate tRNA.

It belongs to the IPP transferase family. In terms of assembly, monomer. Mg(2+) is required as a cofactor.

The catalysed reaction is adenosine(37) in tRNA + dimethylallyl diphosphate = N(6)-dimethylallyladenosine(37) in tRNA + diphosphate. Catalyzes the transfer of a dimethylallyl group onto the adenine at position 37 in tRNAs that read codons beginning with uridine, leading to the formation of N6-(dimethylallyl)adenosine (i(6)A). The chain is tRNA dimethylallyltransferase from Geobacter sulfurreducens (strain ATCC 51573 / DSM 12127 / PCA).